The following is a 212-amino-acid chain: Hevein-like preproprotein (212 aa).

The N-terminal stretch at 1–21 (MKIRLSITIILLSYTVATVAG) is a signal peptide. The Chitin-binding type-1 domain maps to 22–64 (QQCGRQGGGRTCPGNICCSQYGYCGTTADYCSPTNNCQSNCWG). 7 disulfides stabilise this stretch: cysteine 24-cysteine 39, cysteine 33-cysteine 45, cysteine 38-cysteine 52, cysteine 58-cysteine 62, cysteine 100-cysteine 132, cysteine 121-cysteine 155, and cysteine 135-cysteine 191. In terms of domain architecture, Barwin spans 72 to 193 (ESASNVRATY…VDYQFVDCGN (122 aa)).

In terms of assembly, CB-HEL interacts strongly with a fungal fruiting body lectin.

The protein resides in the vacuole. Functionally, fungal growth inhibitors. Neither CB-HEL nor CD-HEL have chitinase activity, but both have antimicrobial activities. CD-HEL has RNase, but no DNase activity. This is Hevein-like preproprotein (HEL) from Arabidopsis thaliana (Mouse-ear cress).